The primary structure comprises 261 residues: 14-3-3-like protein GF14-12 (261 aa).

It belongs to the 14-3-3 family.

Is associated with a DNA binding complex to bind to the G box, a well-characterized cis-acting DNA regulatory element found in plant genes. The chain is 14-3-3-like protein GF14-12 (GRF2) from Zea mays (Maize).